The sequence spans 756 residues: Multicystatin (756 aa).

8 Cystatin domains span residues 3–96 (IVGG…DDST), 97–191 (MPGG…DDIA), 192–285 (KLGG…DDSA), 286–380 (KTGG…DSAK), 381–474 (KLGG…DDSA), 475–568 (KLGG…DDSA), 569–662 (IIGG…DDSA), and 663–756 (KPGG…DATK). 8 short sequence motifs (secondary area of contact) span residues 48 to 52 (QIVAG), 142 to 146 (QVVAG), 237 to 241 (QVVAG), 331 to 335 (QLVSG), 426 to 430 (QVVAG), 520 to 524 (QLVAG), 614 to 618 (QLVAG), and 708 to 712 (QVVAG).

This sequence belongs to the cystatin family. Phytocystatin subfamily. As to expression, expressed abundantly in tuber and leaf.

Its function is as follows. Probably has a role in the plant's defense system. The polypeptide is Multicystatin (Solanum tuberosum (Potato)).